The sequence spans 242 residues: Probable transcriptional regulatory protein BTH_I1015 (242 aa).

This sequence belongs to the TACO1 family.

The protein localises to the cytoplasm. The polypeptide is Probable transcriptional regulatory protein BTH_I1015 (Burkholderia thailandensis (strain ATCC 700388 / DSM 13276 / CCUG 48851 / CIP 106301 / E264)).